The chain runs to 100 residues: Small ribosomal subunit protein uS14c (100 aa).

This sequence belongs to the universal ribosomal protein uS14 family. In terms of assembly, part of the 30S ribosomal subunit.

It is found in the plastid. The protein resides in the chloroplast. Its function is as follows. Binds 16S rRNA, required for the assembly of 30S particles. In Emiliania huxleyi (Coccolithophore), this protein is Small ribosomal subunit protein uS14c.